Here is a 77-residue protein sequence, read N- to C-terminus: Metallocarboxypeptidase inhibitor (77 aa).

The N-terminal stretch at Met-1–Phe-32 is a signal peptide. Gln-33 carries the post-translational modification Pyrrolidone carboxylic acid. 3 disulfide bridges follow: Cys-39/Cys-55, Cys-43/Cys-58, and Cys-49/Cys-65. Residues Gly-70–Val-77 constitute a propeptide, hydrophobic peptide.

This sequence to potato MCPI. As to expression, ovaries.

In terms of biological role, may play a defensive role against insect attacks. The chain is Metallocarboxypeptidase inhibitor from Solanum lycopersicum (Tomato).